Here is a 950-residue protein sequence, read N- to C-terminus: RNA polymerase-associated protein RapA (950 aa).

One can recognise a Helicase ATP-binding domain in the interval 165-333 (EVADRMAPRV…FARLRLLDPN (169 aa)). Position 178-185 (178-185 (DEVGLGKT)) interacts with ATP. Positions 279–282 (DEAH) match the DEAH box motif. One can recognise a Helicase C-terminal domain in the interval 475 to 629 (RVEWLIDTLK…TCPTGNALQH (155 aa)).

The protein belongs to the SNF2/RAD54 helicase family. RapA subfamily. As to quaternary structure, interacts with the RNAP. Has a higher affinity for the core RNAP than for the holoenzyme. Its ATPase activity is stimulated by binding to RNAP.

Its function is as follows. Transcription regulator that activates transcription by stimulating RNA polymerase (RNAP) recycling in case of stress conditions such as supercoiled DNA or high salt concentrations. Probably acts by releasing the RNAP, when it is trapped or immobilized on tightly supercoiled DNA. Does not activate transcription on linear DNA. Probably not involved in DNA repair. The sequence is that of RNA polymerase-associated protein RapA from Pseudomonas aeruginosa (strain LESB58).